Reading from the N-terminus, the 279-residue chain is Large ribosomal subunit protein uL2 (279 aa).

Positions 223–279 (PVAMNPVDHPMGGGEGRASGGHPRSRKGLPAKGFKTRSRTKASNKYIVERRKTRKKK) are disordered. Residues 245-264 (PRSRKGLPAKGFKTRSRTKA) show a composition bias toward basic residues.

This sequence belongs to the universal ribosomal protein uL2 family. As to quaternary structure, part of the 50S ribosomal subunit. Forms a bridge to the 30S subunit in the 70S ribosome.

One of the primary rRNA binding proteins. Required for association of the 30S and 50S subunits to form the 70S ribosome, for tRNA binding and peptide bond formation. It has been suggested to have peptidyltransferase activity; this is somewhat controversial. Makes several contacts with the 16S rRNA in the 70S ribosome. The polypeptide is Large ribosomal subunit protein uL2 (Christiangramia forsetii (strain DSM 17595 / CGMCC 1.15422 / KT0803) (Gramella forsetii)).